A 90-amino-acid chain; its full sequence is Repetitive proline-rich cell wall protein 3 (90 aa).

Residues 1 to 24 form the signal peptide; it reads MASFVSFLVLLLAALILMPQGLAT. Pro residues predominate over residues 46-65; it reads KPPVYKPKPPVYKPKPPVYK. Residues 46–90 form a disordered region; that stretch reads KPPVYKPKPPVYKPKPPVYKPPYKKPPYKKPPYGKYPPVEDNTHA.

The protein belongs to the plant proline-rich protein superfamily. ENOD12 family.

It localises to the secreted. The protein localises to the cell wall. This chain is Repetitive proline-rich cell wall protein 3 (PRP3), found in Glycine max (Soybean).